Reading from the N-terminus, the 125-residue chain is Large ribosomal subunit protein bL12 (125 aa).

This sequence belongs to the bacterial ribosomal protein bL12 family. In terms of assembly, homodimer. Part of the ribosomal stalk of the 50S ribosomal subunit. Forms a multimeric L10(L12)X complex, where L10 forms an elongated spine to which 2 to 4 L12 dimers bind in a sequential fashion. Binds GTP-bound translation factors.

Functionally, forms part of the ribosomal stalk which helps the ribosome interact with GTP-bound translation factors. Is thus essential for accurate translation. The sequence is that of Large ribosomal subunit protein bL12 from Alkalilimnicola ehrlichii (strain ATCC BAA-1101 / DSM 17681 / MLHE-1).